The primary structure comprises 520 residues: 2-isopropylmalate synthase (520 aa).

Residues 12–274 (VLIFDTTLRD…TTGIDTTQIM (263 aa)) enclose the Pyruvate carboxyltransferase domain. Mn(2+)-binding residues include Asp-21, His-209, His-211, and Asn-245. The segment at 398–520 (RLLSLTVIAG…RLHAQHAAAE (123 aa)) is regulatory domain.

Belongs to the alpha-IPM synthase/homocitrate synthase family. LeuA type 1 subfamily. As to quaternary structure, homodimer. Requires Mn(2+) as cofactor.

It is found in the cytoplasm. It carries out the reaction 3-methyl-2-oxobutanoate + acetyl-CoA + H2O = (2S)-2-isopropylmalate + CoA + H(+). Its pathway is amino-acid biosynthesis; L-leucine biosynthesis; L-leucine from 3-methyl-2-oxobutanoate: step 1/4. In terms of biological role, catalyzes the condensation of the acetyl group of acetyl-CoA with 3-methyl-2-oxobutanoate (2-ketoisovalerate) to form 3-carboxy-3-hydroxy-4-methylpentanoate (2-isopropylmalate). The sequence is that of 2-isopropylmalate synthase from Methylobacterium nodulans (strain LMG 21967 / CNCM I-2342 / ORS 2060).